A 188-amino-acid polypeptide reads, in one-letter code: Putative protein SSX9 (188 aa).

The 64-residue stretch at 20–83 (KIQKAFDDIA…TGATDLQGND (64 aa)) folds into the KRAB-related domain. Residues 114-165 (KKPAEVGNDSKEVPEASGLQNDGKQLCPPGKPTTSEKINKASGPKRGKHAWT) are disordered. Residues 115–127 (KPAEVGNDSKEVP) show a composition bias toward basic and acidic residues. Ser123 bears the Phosphoserine mark. The segment covering 156–165 (GPKRGKHAWT) has biased composition (basic residues).

This sequence belongs to the SSX family. As to expression, not detected in any normal or tumor tissues.

In terms of biological role, could act as a modulator of transcription. In Homo sapiens (Human), this protein is Putative protein SSX9.